Reading from the N-terminus, the 358-residue chain is Dynein axonemal assembly factor 10 (358 aa).

WD repeat units follow at residues 64 to 106 (EKPK…TPVY), 116 to 155 (NCID…TPVA), 163 to 206 (EAKR…VRWE), 208 to 250 (NIKN…PTKG), 258 to 298 (AHKS…QRSR), and 320 to 358 (LSTQ…LNRL).

As to quaternary structure, interacts with PIH1D1; the interaction associates DNAAF10 with the R2TP complex. Interacts with several dynein axonemal assembly factors.

It is found in the dynein axonemal particle. In terms of biological role, key assembly factor specifically required for the stability of axonemal dynein heavy chains in cytoplasm. The protein is Dynein axonemal assembly factor 10 (dnaaf10) of Xenopus laevis (African clawed frog).